Reading from the N-terminus, the 180-residue chain is Endoribonuclease YbeY (180 aa).

Positions 149, 153, and 159 each coordinate Zn(2+).

Belongs to the endoribonuclease YbeY family. Zn(2+) is required as a cofactor.

The protein resides in the cytoplasm. Its function is as follows. Single strand-specific metallo-endoribonuclease involved in late-stage 70S ribosome quality control and in maturation of the 3' terminus of the 16S rRNA. The chain is Endoribonuclease YbeY from Prochlorococcus marinus (strain MIT 9515).